An 87-amino-acid polypeptide reads, in one-letter code: Small ribosomal subunit protein uS15c (87 aa).

This sequence belongs to the universal ribosomal protein uS15 family. Part of the 30S ribosomal subunit.

Its subcellular location is the plastid. It is found in the chloroplast. This chain is Small ribosomal subunit protein uS15c (rps15), found in Illicium oligandrum (Star anise).